Here is a 221-residue protein sequence, read N- to C-terminus: Ribonuclease T (221 aa).

One can recognise an Exonuclease domain in the interval 21–195; that stretch reads VVVDVETAGF…YDAEKTADLF (175 aa). 4 residues coordinate Mg(2+): Asp24, Glu26, His182, and Asp187. The Proton donor/acceptor role is filled by His182.

It belongs to the RNase T family. In terms of assembly, homodimer. Requires Mg(2+) as cofactor.

Functionally, trims short 3' overhangs of a variety of RNA species, leaving a one or two nucleotide 3' overhang. Responsible for the end-turnover of tRNA: specifically removes the terminal AMP residue from uncharged tRNA (tRNA-C-C-A). Also appears to be involved in tRNA biosynthesis. The polypeptide is Ribonuclease T (Marinobacter nauticus (strain ATCC 700491 / DSM 11845 / VT8) (Marinobacter aquaeolei)).